The following is a 1124-amino-acid chain: Anillin (1124 aa).

M1 carries the N-acetylmethionine modification. Positions 1-25 (MDPFTEKLLERTRARRENLQRKMAE) are enriched in basic and acidic residues. A required for ubiquitination region spans residues 1–45 (MDPFTEKLLERTRARRENLQRKMAERPTAAPRSMTHAKRARQPLS). Disordered regions lie at residues 1-113 (MDPF…ADTI) and 136-196 (ATAA…ATPV). Positions 1-155 (MDPFTEKLLE…MQKLAEQRRR (155 aa)) are interaction with CD2AP. The interval 1–230 (MDPFTEKLLE…AKQNSVQEQP (230 aa)) is nuclear localization. S54 and S72 each carry phosphoserine. The span at 77–96 (VEVSNLENKQPVESTSAKSC) shows a compositional bias: polar residues. 2 positions are modified to phosphoserine: S97 and S102. Low complexity predominate over residues 97 to 108 (SPSPVSPQVQPQ). A compositionally biased stretch (basic and acidic residues) spans 148–158 (KLAEQRRRWDN). S172 and S182 each carry phosphoserine. Phosphothreonine is present on T194. S225 and S252 each carry phosphoserine. The interaction with F-actin stretch occupies residues 231–676 (GTACLSKFSS…RDLLYSIDAY (446 aa)). K254 participates in a covalent cross-link: Glycyl lysine isopeptide (Lys-Gly) (interchain with G-Cter in SUMO1). S261 bears the Phosphoserine mark. Polar residues predominate over residues 294–305 (TSPVKSTTSITD). The tract at residues 294-328 (TSPVKSTTSITDAKSCEGQNPELLPKTPISPLKTG) is disordered. Residue T320 is modified to Phosphothreonine. Residues S323 and S339 each carry the phosphoserine modification. Residue T364 is modified to Phosphothreonine. At K371 the chain carries N6-acetyllysine. Residues 380–389 (RCQEHSKESP) are compositionally biased toward basic and acidic residues. The interval 380–399 (RCQEHSKESPARSTPHRTPI) is disordered. A phosphothreonine mark is found at T397 and T401. Phosphoserine is present on residues S417, S419, S449, S485, S518, S553, and S561. Residues 569-604 (FSDVLEEGELDMEKSQEEMDQALAESSEEQEDALNI) adopt a coiled-coil conformation. Disordered regions lie at residues 579–600 (DMEKSQEEMDQALAESSEEQED) and 625–664 (LVSTPRLELKDTSRSDESPKPGKFQRTRVPRAESGDSLGS). 2 stretches are compositionally biased toward basic and acidic residues: residues 631–644 (LELKDTSRSDESPK) and 654–664 (PRAESGDSLGS). S637, S642, S658, S661, and S664 each carry phosphoserine. The residue at position 671 (Y671) is a Phosphotyrosine. A phosphoserine mark is found at S678, S688, S792, and S927. Positions 730-1124 (QQTVIYQASQ…DACYKPIGKP (395 aa)) are localization to the cleavage furrow. The 125-residue stretch at 983-1107 (SVEERGFLTI…WMQKLNQVLV (125 aa)) folds into the PH domain.

Interacts with F-actin. Interacts with CD2AP. May interact with RHOA. Interacts with FZR1/CDH1 during mitotic exit. In terms of processing, phosphorylated during mitosis. Ubiquitinated, and this requires FZR1/CDH1. As to expression, ubiquitously expressed. Present at highest levels in the brain, at high levels in the placenta and testis, at intermediate levels in the intestine, ovary, skeletal muscle and thymus and at lower levels in heart, kidney, liver, lung, pancreas, prostate and spleen. In the kidney, it is widely expressed in tubules, but sparsely expressed in the glomerulus. Expression is significantly increased in renal biopsy specimens from idiopathic FSGS. Overexpressed in many tumor types including breast, colorectal, endometrial, hepatic, kidney, lung, ovarian and pancreatic tumors.

The protein resides in the nucleus. It is found in the cytoplasm. Its subcellular location is the cytoskeleton. The protein localises to the cell cortex. It localises to the cell projection. The protein resides in the bleb. Functionally, required for cytokinesis. Essential for the structural integrity of the cleavage furrow and for completion of cleavage furrow ingression. Plays a role in bleb assembly during metaphase and anaphase of mitosis. May play a significant role in podocyte cell migration. This Homo sapiens (Human) protein is Anillin (ANLN).